The sequence spans 100 residues: Urease subunit gamma (100 aa).

The protein belongs to the urease gamma subunit family. As to quaternary structure, heterotrimer of UreA (gamma), UreB (beta) and UreC (alpha) subunits. Three heterotrimers associate to form the active enzyme.

It localises to the cytoplasm. The catalysed reaction is urea + 2 H2O + H(+) = hydrogencarbonate + 2 NH4(+). Its pathway is nitrogen metabolism; urea degradation; CO(2) and NH(3) from urea (urease route): step 1/1. The sequence is that of Urease subunit gamma from Burkholderia ambifaria (strain MC40-6).